The following is a 314-amino-acid chain: tRNA pseudouridine synthase B (314 aa).

His-43 is a substrate binding site. The active-site Nucleophile is Asp-48. The substrate site is built by Tyr-76, Tyr-179, and Leu-200.

This sequence belongs to the pseudouridine synthase TruB family. Type 1 subfamily.

The enzyme catalyses uridine(55) in tRNA = pseudouridine(55) in tRNA. Responsible for synthesis of pseudouridine from uracil-55 in the psi GC loop of transfer RNAs. The polypeptide is tRNA pseudouridine synthase B (Salmonella paratyphi A (strain ATCC 9150 / SARB42)).